The sequence spans 574 residues: Sulfate adenylyltransferase (574 aa).

An N-terminal region spans residues 1–170; it reads MANPPHGGVL…VEAIDRLEHY (170 aa). The interval 171–395 is catalytic; that stretch reads DYVGLRYTPA…LRESHPPRNQ (225 aa). Gln198 contacts sulfate. ATP contacts are provided by residues 198–201 and 292–295; these read QTRN and GRDH. Catalysis depends on residues Thr199, Arg200, and Asn201. Arg200 is a sulfate binding site. Ala296 lines the sulfate pocket. Met334 serves as a coordination point for ATP. The tract at residues 396–574 is allosteric regulation domain; adenylyl-sulfate kinase-like; sequence QGFTVFLTGY…LESQGLLTQL (179 aa). Residues 435 to 438, Arg452, 478 to 479, and Arg516 each bind 3'-phosphoadenylyl sulfate; these read ETVR and IA.

The protein in the N-terminal section; belongs to the sulfate adenylyltransferase family. In the C-terminal section; belongs to the APS kinase family. As to quaternary structure, homohexamer. Dimer of trimers.

The protein localises to the cytoplasm. It carries out the reaction sulfate + ATP + H(+) = adenosine 5'-phosphosulfate + diphosphate. It functions in the pathway sulfur metabolism; hydrogen sulfide biosynthesis; sulfite from sulfate: step 1/3. Allosterically inhibited by 3'-phosphoadenosine 5'-phosphosulfate (PAPS). In terms of biological role, catalyzes the first intracellular reaction of sulfate assimilation, forming adenosine-5'-phosphosulfate (APS) from inorganic sulfate and ATP. Plays an important role in sulfate activation as a component of the biosynthesis pathway of sulfur-containing amino acids. The chain is Sulfate adenylyltransferase from Phaeosphaeria nodorum (strain SN15 / ATCC MYA-4574 / FGSC 10173) (Glume blotch fungus).